We begin with the raw amino-acid sequence, 430 residues long: Adenylosuccinate synthetase (430 aa).

Residues 12–18 (GDEGKGK) and 40–42 (GHT) each bind GTP. Asp-13 serves as the catalytic Proton acceptor. Residues Asp-13 and Gly-40 each contribute to the Mg(2+) site. Residues 13–16 (DEGK), 38–41 (NAGH), Thr-130, Arg-144, Gln-224, Thr-239, and Arg-303 each bind IMP. His-41 serves as the catalytic Proton donor. Position 299 to 305 (299 to 305 (TTTGRKR)) interacts with substrate. Residues Arg-305, 331-333 (KLD), and 413-415 (STS) contribute to the GTP site.

It belongs to the adenylosuccinate synthetase family. In terms of assembly, homodimer. It depends on Mg(2+) as a cofactor.

The protein resides in the cytoplasm. The catalysed reaction is IMP + L-aspartate + GTP = N(6)-(1,2-dicarboxyethyl)-AMP + GDP + phosphate + 2 H(+). It participates in purine metabolism; AMP biosynthesis via de novo pathway; AMP from IMP: step 1/2. Its function is as follows. Plays an important role in the de novo pathway of purine nucleotide biosynthesis. Catalyzes the first committed step in the biosynthesis of AMP from IMP. The sequence is that of Adenylosuccinate synthetase from Ruegeria pomeroyi (strain ATCC 700808 / DSM 15171 / DSS-3) (Silicibacter pomeroyi).